The following is a 62-amino-acid chain: MQKLLIILILFCILKFNVDVEGRTATMCDLPECQERCKRQNKKGKCVIEPEMNIVYHLCKCY.

The N-terminal stretch at 1-22 is a signal peptide; that stretch reads MQKLLIILILFCILKFNVDVEG. Intrachain disulfides connect cysteine 28–cysteine 46, cysteine 33–cysteine 59, and cysteine 37–cysteine 61.

Belongs to the short scorpion toxin superfamily. Potassium channel inhibitor family. Alpha-KTx 23 subfamily. Expressed by the venom gland.

Its subcellular location is the secreted. Functionally, may block potassium channels. The sequence is that of U10-hottentoxin-Hj3a from Hottentotta judaicus (Black scorpion).